A 164-amino-acid polypeptide reads, in one-letter code: Magnesium-dependent phosphatase 1 (164 aa).

The active-site Nucleophile is D11. Position 11 (D11) interacts with Mg(2+). 2 residues coordinate phosphate: L12 and D13. D13 serves as a coordination point for Mg(2+). D13 (proton donor) is an active-site residue. Position 20 (W20) interacts with substrate. Residues S69, R70, and K100 each contribute to the phosphate site. Residue R70 participates in substrate binding. A Mg(2+)-binding site is contributed by D123.

This sequence belongs to the HAD-like hydrolase superfamily. The cofactor is Mg(2+).

The catalysed reaction is O-phospho-L-tyrosyl-[protein] + H2O = L-tyrosyl-[protein] + phosphate. Inhibited by vanadate and zinc, and slightly by calcium. Functionally, magnesium-dependent phosphatase which may act as a tyrosine phosphatase. The polypeptide is Magnesium-dependent phosphatase 1 (Mdp1) (Mus musculus (Mouse)).